Reading from the N-terminus, the 340-residue chain is DnaJ homolog subfamily C member 22 (340 aa).

The 50-residue stretch at 1–50 (MGKSLLAAYGLWALGGPLGLYHIYLGRDSHALLWMLTLGGFGMGWMWDFW) folds into the TM2 domain. 7 helical membrane passes run 5 to 25 (LLAA…HIYL), 30 to 50 (HALL…WDFW), 81 to 101 (FIGQ…GLSF), 105 to 125 (FHMV…ATVG), 135 to 155 (LIAA…MIPI), 186 to 206 (IGLV…LNTS), and 212 to 232 (VAGS…ISAL). The J domain occupies 278-340 (MACKVLGVNF…LMRLRKSKTL (63 aa)).

The protein localises to the membrane. In terms of biological role, may function as a co-chaperone. The sequence is that of DnaJ homolog subfamily C member 22 (dnajc22) from Xenopus tropicalis (Western clawed frog).